We begin with the raw amino-acid sequence, 143 residues long: Probable cyclic pyranopterin monophosphate synthase (143 aa).

Residues 61 to 63 and 97 to 98 each bind substrate; these read MCH and ME. The active site involves aspartate 112.

Belongs to the MoaC family. As to quaternary structure, homohexamer; trimer of dimers.

It carries out the reaction (8S)-3',8-cyclo-7,8-dihydroguanosine 5'-triphosphate = cyclic pyranopterin phosphate + diphosphate. It participates in cofactor biosynthesis; molybdopterin biosynthesis. Catalyzes the conversion of (8S)-3',8-cyclo-7,8-dihydroguanosine 5'-triphosphate to cyclic pyranopterin monophosphate (cPMP). The sequence is that of Probable cyclic pyranopterin monophosphate synthase from Sulfolobus acidocaldarius (strain ATCC 33909 / DSM 639 / JCM 8929 / NBRC 15157 / NCIMB 11770).